Here is a 590-residue protein sequence, read N- to C-terminus: 2-isopropylmalate synthase (590 aa).

The 275-residue stretch at 40–314 (PRWCAVDLRD…DPQIDFSDID (275 aa)) folds into the Pyruvate carboxyltransferase domain. The Mg(2+) site is built by Asp49, His253, His255, and Asn289. The interval 456-590 (APETESDAKW…SSVPAELAGV (135 aa)) is regulatory domain.

It belongs to the alpha-IPM synthase/homocitrate synthase family. LeuA type 2 subfamily. Homodimer. Mg(2+) is required as a cofactor.

It localises to the cytoplasm. It carries out the reaction 3-methyl-2-oxobutanoate + acetyl-CoA + H2O = (2S)-2-isopropylmalate + CoA + H(+). Its pathway is amino-acid biosynthesis; L-leucine biosynthesis; L-leucine from 3-methyl-2-oxobutanoate: step 1/4. Catalyzes the condensation of the acetyl group of acetyl-CoA with 3-methyl-2-oxobutanoate (2-ketoisovalerate) to form 3-carboxy-3-hydroxy-4-methylpentanoate (2-isopropylmalate). The protein is 2-isopropylmalate synthase of Leifsonia xyli subsp. xyli (strain CTCB07).